The sequence spans 321 residues: uncharacterized protein (321 aa).

Residues 1–18 (MKKMKKLLLLLSASFAFS) form the signal peptide.

This is an uncharacterized protein from Aquifex aeolicus (strain VF5).